A 397-amino-acid chain; its full sequence is Lymphoid enhancer-binding factor 1 (397 aa).

The segment at 1–60 (MPQLSGGGGGGDPELCATDEMIPFKDEGDPQKEKIFAEISHPEEEGDLADIKSSLVNESE) is CTNNB1-binding. Lys-25 participates in a covalent cross-link: Glycyl lysine isopeptide (Lys-Gly) (interchain with G-Cter in SUMO). The segment at 59–102 (SEIIPASNGHEVVRQAPSSQEPYHDKAREHPDEGKHPDGGLYNK) is disordered. Positions 80-96 (PYHDKAREHPDEGKHPD) are enriched in basic and acidic residues. A Phosphoserine modification is found at Ser-130. Thr-153 is modified (phosphothreonine; by NLK). Ser-164 carries the phosphoserine; by NLK modification. 2 disordered regions span residues 164-191 (SPGS…APEI) and 266-296 (VKQE…KRPH). Residue Lys-267 forms a Glycyl lysine isopeptide (Lys-Gly) (interchain with G-Cter in SUMO) linkage. Positions 267 to 294 (KQEHPHTDSDLMHVKPQHEQRKEQEPKR) are enriched in basic and acidic residues. Positions 297–365 (IKKPLNAFML…LHMQLYPGWS (69 aa)) form a DNA-binding region, HMG box. Residues 367–397 (RDNYGKKKKRKREKLQESTSGTGPRMTAAYI) form a disordered region.

The protein belongs to the TCF/LEF family. In terms of assembly, binds the armadillo repeat of CTNNB1 and forms a stable complex. Binds TLE1, ALYREF/THOC4, MDFI and MDFIC. Interacts with NLK. Interacts with EP300 and PIASG. Interacts with DAZAP2. Post-translationally, phosphorylated at Thr-153 and/or Ser-164 by NLK. Phosphorylation by NLK at these sites represses LEF1-mediated transcriptional activation of target genes of the canonical Wnt signaling pathway. Expressed in Vgamma1.1 and Vgamma2 gamma-delta T-cells, however not expressed in gamma-delta thymocytes fated for Il17a expression (at protein level). Expressed in alpha-beta T-cell lineages. Expressed in the thymus. Found in distinct epithelial cell compartments of the skin and is abundant in the hair-producing progenitors of the follicle.

It is found in the nucleus. In terms of biological role, transcription factor that binds DNA in a sequence-specific manner. Participates in the Wnt signaling pathway. Activates transcription of target genes in the presence of CTNNB1 and EP300. PIASG antagonizes both Wnt-dependent and Wnt-independent activation by LEF1. TLE1, TLE2, TLE3 and TLE4 repress transactivation mediated by LEF1 and CTNNB1. Regulates T-cell receptor alpha enhancer function. Required for IL17A expressing gamma-delta T-cell maturation and development, via binding to regulator loci of BLK to modulate expression. Acts as a positive regulator of odontoblast differentiation during mesenchymal tooth germ formation, expression is repressed during the bell stage by MSX1-mediated inhibition of CTNNB1 signaling. May play a role in hair cell differentiation and follicle morphogenesis. The chain is Lymphoid enhancer-binding factor 1 from Mus musculus (Mouse).